Here is a 452-residue protein sequence, read N- to C-terminus: Phosphoglucosamine mutase (452 aa).

Ser98 (phosphoserine intermediate) is an active-site residue. Positions 98, 239, 241, and 243 each coordinate Mg(2+). At Ser98 the chain carries Phosphoserine.

Belongs to the phosphohexose mutase family. Mg(2+) serves as cofactor. In terms of processing, activated by phosphorylation.

The catalysed reaction is alpha-D-glucosamine 1-phosphate = D-glucosamine 6-phosphate. Functionally, catalyzes the conversion of glucosamine-6-phosphate to glucosamine-1-phosphate. This chain is Phosphoglucosamine mutase, found in Anaplasma marginale (strain St. Maries).